The sequence spans 155 residues: UPF0060 membrane protein MA_3936 (155 aa).

Helical transmembrane passes span 8-28, 35-55, and 62-82; these read LCPF…ICLW, AVFG…PTFQ, and VYAA…LFVD.

The protein belongs to the UPF0060 family.

The protein localises to the cell membrane. The polypeptide is UPF0060 membrane protein MA_3936 (Methanosarcina acetivorans (strain ATCC 35395 / DSM 2834 / JCM 12185 / C2A)).